The following is a 147-amino-acid chain: Ribonuclease P protein component 2 (147 aa).

The protein belongs to the eukaryotic/archaeal RNase P protein component 2 family. Consists of a catalytic RNA component and at least 4-5 protein subunits.

Its subcellular location is the cytoplasm. It catalyses the reaction Endonucleolytic cleavage of RNA, removing 5'-extranucleotides from tRNA precursor.. Part of ribonuclease P, a protein complex that generates mature tRNA molecules by cleaving their 5'-ends. The polypeptide is Ribonuclease P protein component 2 (Methanocorpusculum labreanum (strain ATCC 43576 / DSM 4855 / Z)).